A 365-amino-acid chain; its full sequence is Aminomethyltransferase (365 aa).

The protein belongs to the GcvT family. As to quaternary structure, the glycine cleavage system is composed of four proteins: P, T, L and H.

The enzyme catalyses N(6)-[(R)-S(8)-aminomethyldihydrolipoyl]-L-lysyl-[protein] + (6S)-5,6,7,8-tetrahydrofolate = N(6)-[(R)-dihydrolipoyl]-L-lysyl-[protein] + (6R)-5,10-methylene-5,6,7,8-tetrahydrofolate + NH4(+). In terms of biological role, the glycine cleavage system catalyzes the degradation of glycine. In Halalkalibacterium halodurans (strain ATCC BAA-125 / DSM 18197 / FERM 7344 / JCM 9153 / C-125) (Bacillus halodurans), this protein is Aminomethyltransferase.